A 207-amino-acid chain; its full sequence is 5-nitrosalicylic acid 1,2-dioxygenase (207 aa).

Residues 85-151 (QLIHPGEEVT…GDKDTLMYVI (67 aa)) enclose the Cupin type-2 domain.

The enzyme catalyses 5-nitrosalicylate + O2 = 2-oxo-3-(5-oxofuran-2-ylidene)propanoate + nitrite + H(+). Its function is as follows. Dioxygenase that catalyzes the cleavage of the aromatic ring of 5-nitrosalicylate (5NSA) without prior removal of the nitro group in biodegradation of 5-nitroanthranilate. The sequence is that of 5-nitrosalicylic acid 1,2-dioxygenase (naaB) from Bradyrhizobium sp.